The primary structure comprises 108 residues: MLKTTLLFFMTALCEIVGCFLPWLWLKRGATAWLLVPAGVSLALFVWLLTLHPAASGRVYAAYGGVYVCTALLWLRFVDGVRLSLYDWSGALIALCGMLIIVAGWGRA.

4 helical membrane-spanning segments follow: residues 6–26, 29–49, 61–81, and 85–105; these read LLFFMTALCEIVGCFLPWLWL, GATAWLLVPAGVSLALFVWLL, AAYGGVYVCTALLWLRFVDGV, and LYDWSGALIALCGMLIIVAGW.

It belongs to the UPF0060 family.

It localises to the cell inner membrane. This Citrobacter koseri (strain ATCC BAA-895 / CDC 4225-83 / SGSC4696) protein is UPF0060 membrane protein CKO_01576.